The sequence spans 76 residues: DNA-directed RNA polymerase subunit epsilon (76 aa).

Belongs to the RNA polymerase subunit epsilon family. In terms of assembly, RNAP is composed of a core of 2 alpha, a beta and a beta' subunit. The core is associated with a delta subunit, and at least one of epsilon or omega. When a sigma factor is associated with the core the holoenzyme is formed, which can initiate transcription.

The catalysed reaction is RNA(n) + a ribonucleoside 5'-triphosphate = RNA(n+1) + diphosphate. Functionally, a non-essential component of RNA polymerase (RNAP). The protein is DNA-directed RNA polymerase subunit epsilon of Streptococcus pyogenes serotype M1.